Here is a 694-residue protein sequence, read N- to C-terminus: uncharacterized protein (694 aa).

The 152-residue stretch at 17-168 folds into the Resolvase/invertase-type recombinase catalytic domain; sequence DAFLYVRQSS…GGILNKARRG (152 aa). Ser25 (O-(5'-phospho-DNA)-serine intermediate) is an active-site residue. The recombinase DNA-binding region spans 175-316; sequence PIGLVYTPDA…QAALEQNATG (142 aa). Residues 386–406 form a helical membrane-spanning segment; it reads AVSALLLEVMAPAAIDVALAV.

The protein localises to the membrane. This is an uncharacterized protein from Sinorhizobium fredii (strain NBRC 101917 / NGR234).